The following is a 417-amino-acid chain: Phosphoglycerate kinase, cytosolic (417 aa).

Positions 23, 24, 25, 26, 39, 61, 62, 64, 65, 132, 168, and 169 each coordinate (2R)-3-phosphoglycerate. The ADP site is built by Gly-214 and Ala-215. Gly-214 lines the CDP pocket. Ala-215 and Lys-216 together coordinate AMP. Ala-215 is a binding site for ATP. Ala-215 contacts Mg(2+). Lys-216 lines the (2R)-3-phosphoglycerate pocket. Asp-219 is a binding site for CDP. Asp-219 provides a ligand contact to Mg(2+). ADP contacts are provided by Lys-220 and Gly-238. Lys-220 is an AMP binding site. Position 220 (Lys-220) interacts with ATP. Gly-238 contacts CDP. AMP contacts are provided by Ala-239 and Ala-311. ATP-binding residues include Ala-239 and Ala-311. Residues Ala-311 and Asn-335 each contribute to the ADP site. CDP-binding residues include Gly-336 and Phe-341. Residues Phe-341, Glu-342, Asp-374, and Thr-375 each coordinate ADP. Glu-342 is an AMP binding site. Residues Glu-342, Asp-374, and Thr-375 each contribute to the ATP site. Asp-374 contacts Mg(2+).

This sequence belongs to the phosphoglycerate kinase family. In terms of assembly, monomer. It depends on Mg(2+) as a cofactor.

Its subcellular location is the cytoplasm. It carries out the reaction (2R)-3-phosphoglycerate + ATP = (2R)-3-phospho-glyceroyl phosphate + ADP. Its pathway is carbohydrate degradation; glycolysis; pyruvate from D-glyceraldehyde 3-phosphate: step 2/5. This is Phosphoglycerate kinase, cytosolic (PGKB) from Leishmania mexicana.